Reading from the N-terminus, the 513-residue chain is ATP synthase subunit alpha (513 aa).

ATP is bound at residue 169-176 (GDRQTGKT).

Belongs to the ATPase alpha/beta chains family. F-type ATPases have 2 components, CF(1) - the catalytic core - and CF(0) - the membrane proton channel. CF(1) has five subunits: alpha(3), beta(3), gamma(1), delta(1), epsilon(1). CF(0) has three main subunits: a(1), b(2) and c(9-12). The alpha and beta chains form an alternating ring which encloses part of the gamma chain. CF(1) is attached to CF(0) by a central stalk formed by the gamma and epsilon chains, while a peripheral stalk is formed by the delta and b chains.

The protein localises to the cell inner membrane. It catalyses the reaction ATP + H2O + 4 H(+)(in) = ADP + phosphate + 5 H(+)(out). In terms of biological role, produces ATP from ADP in the presence of a proton gradient across the membrane. The alpha chain is a regulatory subunit. In Bordetella pertussis (strain Tohama I / ATCC BAA-589 / NCTC 13251), this protein is ATP synthase subunit alpha.